The primary structure comprises 651 residues: MKDYDELLKYYELHETIGTGGFAKVKLACHILTGEMVAIKIMDKNTLGSDLPRIKTEIEALKNLRHQHICQLYHVLETANKIFMVLEYCPGGELFDYIISQDRLSEEETRVVFRQIVSAVAYVHSQGYAHRDLKPENLLFDEYHKLKLIDFGLCAKPKGNKDYHLQTCCGSLAYAAPELIQGKSYLGSEADVWSMGILLYVLMCGFLPFDDDNVMALYKKIMRGKYDVPKWLSPSSILLLQQMLQVDPKKRISMKNLLNHPWIMQDYNYPVEWQSKNPFIHLDDDCVTELSVHHRNNRQTMEDLISLWQYDHLTATYLLLLAKKARGKPVRLRLSSFSCGQASATPFTDIKSNNWSLEDVTASDKNYVAGLIDYDWCEDDLSTGAATPRTSQFTKYWTESNGVESKSLTPALCRTPANKLKNKENVYTPKSAVKNEEYFMFPEPKTPVNKNQHKREILTTPNRYTTPSKARNQCLKETPIKIPVNSTGTDKLMTGVISPERRCRSVELDLNQAHMEETPKRKGAKVFGSLERGLDKVITVLTRSKRKGSARDGPRRLKLHYNVTTTRLVNPDQLLNEIMSILPKKHVDFVQKGYTLKCQTQSDFGKVTMQFELEVCQLQKPDVVGIRRQRLKGDAWVYKRLVEDILSSCKV.

In terms of domain architecture, Protein kinase spans 11-263; that stretch reads YELHETIGTG…MKNLLNHPWI (253 aa). ATP-binding positions include 17 to 25 and Lys40; that span reads IGTGGFAKV. Thr56 bears the Phosphothreonine; by autocatalysis mark. The active-site Proton acceptor is Asp132. Tyr163 is subject to Phosphotyrosine; by autocatalysis. Thr167 is subject to Phosphothreonine; by autocatalysis. Ser171 and Ser253 each carry phosphoserine; by autocatalysis. The interval 282-321 is UBA-like; sequence LDDDCVTELSVHHRNNRQTMEDLISLWQYDHLTATYLLLL. The segment at 326–651 is autoinhibitory region; it reads RGKPVRLRLS…VEDILSSCKV (326 aa). Ser336, Ser343, and Ser356 each carry phosphoserine; by autocatalysis. Phosphotyrosine is present on Tyr367. Ser391 carries the phosphoserine; by autocatalysis modification. Position 398 is a phosphothreonine; by autocatalysis (Thr398). Ser407 carries the post-translational modification Phosphoserine; by autocatalysis. Thr409 bears the Phosphothreonine mark. Ser431 is subject to Phosphoserine; by autocatalysis. At Thr478 the chain carries Phosphothreonine. At Thr494 the chain carries Phosphothreonine; by autocatalysis. Ser498 carries the phosphoserine modification. Ser505 bears the Phosphoserine; by autocatalysis mark. At Thr518 the chain carries Phosphothreonine. The residue at position 529 (Ser529) is a Phosphoserine; by autocatalysis. A Phosphoserine modification is found at Ser529. Position 539 is a phosphothreonine; by autocatalysis (Thr539). The KA1 domain occupies 602–651; that stretch reads SDFGKVTMQFELEVCQLQKPDVVGIRRQRLKGDAWVYKRLVEDILSSCKV.

This sequence belongs to the protein kinase superfamily. CAMK Ser/Thr protein kinase family. SNF1 subfamily. In terms of assembly, monomer. Interacts with ZNF622 and PPP1R8. Autophosphorylated: autophosphorylation of the T-loop at Thr-167 and Ser-171 is required for activation. Thr-478 phosphorylation during mitosis promotes interaction with PPP1R8. As to expression, expressed in placenta, kidney, thymus, testis, ovary and intestine.

It localises to the cell membrane. The enzyme catalyses L-tyrosyl-[protein] + ATP = O-phospho-L-tyrosyl-[protein] + ADP + H(+). The catalysed reaction is L-seryl-[protein] + ATP = O-phospho-L-seryl-[protein] + ADP + H(+). It carries out the reaction L-threonyl-[protein] + ATP = O-phospho-L-threonyl-[protein] + ADP + H(+). With respect to regulation, activated by autophosphorylation of the T-loop at Thr-167 and Ser-171: in contrast to other members of the SNF1 subfamily, phosphorylation at Thr-167 is not mediated by STK11/LKB1 but via autophosphorylation instead. Inhibited by calcium-binding. Kinase activity is also regulated by reducing agents: dithiothreitol (DTT) or reduced glutathione are required for kinase activity in vitro; such dependence is however not due to the presence of disulfide bonds. Functionally, serine/threonine-protein kinase involved in various processes such as cell cycle regulation, self-renewal of stem cells, apoptosis and splicing regulation. Has a broad substrate specificity; phosphorylates BCL2L14, CDC25B, MAP3K5/ASK1 and ZNF622. Acts as an activator of apoptosis by phosphorylating and activating MAP3K5/ASK1. Acts as a regulator of cell cycle, notably by mediating phosphorylation of CDC25B, promoting localization of CDC25B to the centrosome and the spindle poles during mitosis. Plays a key role in cell proliferation and carcinogenesis. Required for proliferation of embryonic and postnatal multipotent neural progenitors. Phosphorylates and inhibits BCL2L14, possibly leading to affect mammary carcinogenesis by mediating inhibition of the pro-apoptotic function of BCL2L14. Also involved in the inhibition of spliceosome assembly during mitosis by phosphorylating ZNF622, thereby contributing to its redirection to the nucleus. May also play a role in primitive hematopoiesis. The protein is Maternal embryonic leucine zipper kinase (MELK) of Homo sapiens (Human).